Consider the following 94-residue polypeptide: Protein FAM24B (94 aa).

An N-terminal signal peptide occupies residues 1-21 (MPVIAGGILAALLLLIVVVLC).

This sequence belongs to the FAM24 family.

It localises to the secreted. In Homo sapiens (Human), this protein is Protein FAM24B (FAM24B).